The following is a 253-amino-acid chain: Triosephosphate isomerase (253 aa).

8 to 10 (NWK) contributes to the substrate binding site. Catalysis depends on His93, which acts as the Electrophile. Glu165 functions as the Proton acceptor in the catalytic mechanism. Substrate-binding positions include Gly171, Ser210, and 231–232 (GG).

It belongs to the triosephosphate isomerase family. In terms of assembly, homodimer.

The protein localises to the cytoplasm. The enzyme catalyses D-glyceraldehyde 3-phosphate = dihydroxyacetone phosphate. It participates in carbohydrate biosynthesis; gluconeogenesis. The protein operates within carbohydrate degradation; glycolysis; D-glyceraldehyde 3-phosphate from glycerone phosphate: step 1/1. Involved in the gluconeogenesis. Catalyzes stereospecifically the conversion of dihydroxyacetone phosphate (DHAP) to D-glyceraldehyde-3-phosphate (G3P). This chain is Triosephosphate isomerase, found in Francisella tularensis subsp. mediasiatica (strain FSC147).